The sequence spans 1374 residues: DNA-directed RNA polymerase subunit beta' (1374 aa).

Residues 1 to 47 (MTSTSPKSRKPSTKTTKSKSKSKSKSKAAKAAAAGASPALARTPPQF) are disordered. The segment covering 7–28 (KSRKPSTKTTKSKSKSKSKSKA) has biased composition (basic residues). Positions 29-39 (AKAAAAGASPA) are enriched in low complexity. Zn(2+)-binding residues include Cys258, Cys325, Cys332, and Cys335. Positions 1344-1374 (RPTGENELEEEQLPDPSALEGLQQEGLLTEE) are disordered. The span at 1362–1374 (LEGLQQEGLLTEE) shows a compositional bias: low complexity.

This sequence belongs to the RNA polymerase beta' chain family. RpoC2 subfamily. As to quaternary structure, in cyanobacteria the RNAP catalytic core is composed of 2 alpha, 1 beta, 1 beta', 1 gamma and 1 omega subunit. When a sigma factor is associated with the core the holoenzyme is formed, which can initiate transcription. The cofactor is Zn(2+).

The catalysed reaction is RNA(n) + a ribonucleoside 5'-triphosphate = RNA(n+1) + diphosphate. In terms of biological role, DNA-dependent RNA polymerase catalyzes the transcription of DNA into RNA using the four ribonucleoside triphosphates as substrates. The polypeptide is DNA-directed RNA polymerase subunit beta' (Prochlorococcus marinus (strain MIT 9313)).